The sequence spans 278 residues: Putative B3 domain-containing protein At2g21920 (278 aa).

Positions 168 to 275 (ISKTLSRTDV…KFIILNFEYN (108 aa)) form a DNA-binding region, TF-B3.

The protein localises to the nucleus. In Arabidopsis thaliana (Mouse-ear cress), this protein is Putative B3 domain-containing protein At2g21920.